The primary structure comprises 600 residues: MSHQEGSTGGLPDLVTESLFSSPEEQSGVAAVTAASSDIEMAATEPSTGDGGDTRDGGFLNDASTENQNTDSESSSEDVELESMGEGLFGYPLVGEETEREEEEEEMEEEGEEEEQPRMCPRCGGTNHDQCLLDEDQALEEWISSETSALPRSRWQVLTALRQRQLGSSARFVYEACGARTFVQRFRLQYLLGSHAGSVSTIHFNQRGTRLASSGDDLRVIVWDWVRQKPVLNFESGHDINVIQAKFFPNCGDSTLAMCGHDGQVRVAELINASYCENTKRVAKHRGPAHELALEPDSPYKFLTSGEDAVVFTIDLRQDRPASKVVVTRENDKKVGLYTISMNPANIYQFAVGGHDQFVRIYDQRRIDKKENNGVLKKFTPHHLVYCDFPTNITCVVYSHDGTELLASYNDEDIYLFNSSLSDGAQYVKRYKGHRNNDTIKCVNFYGPRSEFVVSGSDCGHVFFWEKSSSQIIQFMEGDRGDIVNCLEPHPYLPVLATSGLDQHVRIWTPTAKTATELTGLKDVIKKNKQERDEDNLNYTDSFDNRMLRFFVRHLLQRAHQPGWRDHGAEFPDEEELDESSSTSDTSEEEGQDRVQCIPS.

The tract at residues 1 to 122 is disordered; it reads MSHQEGSTGG…EEEQPRMCPR (122 aa). 2 stretches are compositionally biased toward acidic residues: residues 74 to 83 and 96 to 115; these read SSSEDVELES and EETE…EEEE. WD repeat units lie at residues 194–233, 237–278, 284–324, 332–372, 388–427, 435–475, and 479–518; these read SHAG…PVLN, GHDI…YCEN, KHRG…PASK, DKKV…KKEN, DFPT…GAQY, RNND…IIQF, and DRGD…ATEL. The interval 562–600 is disordered; the sequence is PGWRDHGAEFPDEEELDESSSTSDTSEEEGQDRVQCIPS.

It belongs to the WD repeat DCAF8 family.

The chain is DDB1- and CUL4-associated factor 8-like protein 1 (DCAF8L1) from Homo sapiens (Human).